The chain runs to 239 residues: Pyridoxine 5'-phosphate synthase (239 aa).

Asn-7 is a binding site for 3-amino-2-oxopropyl phosphate. Asp-9 to His-10 is a 1-deoxy-D-xylulose 5-phosphate binding site. A 3-amino-2-oxopropyl phosphate-binding site is contributed by Arg-18. Catalysis depends on His-43, which acts as the Proton acceptor. Positions 45 and 50 each coordinate 1-deoxy-D-xylulose 5-phosphate. Glu-70 acts as the Proton acceptor in catalysis. Position 100 (Thr-100) interacts with 1-deoxy-D-xylulose 5-phosphate. His-191 (proton donor) is an active-site residue. 3-amino-2-oxopropyl phosphate contacts are provided by residues Gly-192 and Gly-213 to His-214.

It belongs to the PNP synthase family. Homooctamer; tetramer of dimers.

Its subcellular location is the cytoplasm. The enzyme catalyses 3-amino-2-oxopropyl phosphate + 1-deoxy-D-xylulose 5-phosphate = pyridoxine 5'-phosphate + phosphate + 2 H2O + H(+). It functions in the pathway cofactor biosynthesis; pyridoxine 5'-phosphate biosynthesis; pyridoxine 5'-phosphate from D-erythrose 4-phosphate: step 5/5. In terms of biological role, catalyzes the complicated ring closure reaction between the two acyclic compounds 1-deoxy-D-xylulose-5-phosphate (DXP) and 3-amino-2-oxopropyl phosphate (1-amino-acetone-3-phosphate or AAP) to form pyridoxine 5'-phosphate (PNP) and inorganic phosphate. The polypeptide is Pyridoxine 5'-phosphate synthase (Trichlorobacter lovleyi (strain ATCC BAA-1151 / DSM 17278 / SZ) (Geobacter lovleyi)).